A 407-amino-acid polypeptide reads, in one-letter code: Pleckstrin homology-like domain family A member 1 (407 aa).

2 stretches are compositionally biased toward basic and acidic residues: residues Met-1 to Ser-11 and Arg-54 to Pro-63. The disordered stretch occupies residues Met-1 to Ser-67. One can recognise a PH domain in the interval Ser-149 to Leu-184. Disordered stretches follow at residues Lys-188–Ala-224 and Gln-296–Ala-407. 2 stretches are compositionally biased toward low complexity: residues Gln-189–Gln-204 and Gln-297–Ile-319. The 15 X 2 AA repeats of P-Q stretch occupies residues Pro-312–Gln-348. The segment covering Gln-320–Gln-344 has biased composition (pro residues). The tract at residues Pro-354 to His-381 is 11 X 2 AA repeats of P-H. The segment covering Pro-354–Gln-384 has biased composition (basic residues). Positions His-385–Gln-395 are enriched in low complexity.

In terms of assembly, interacts with RPL14, EIF3S7 and PABPC4.

It localises to the cytoplasm. Its subcellular location is the cytoplasmic vesicle. It is found in the nucleus. The protein localises to the nucleolus. Its function is as follows. Seems to be involved in regulation of apoptosis. May be involved in detachment-mediated programmed cell death. May mediate apoptosis during neuronal development. May be involved in regulation of anti-apoptotic effects of IGF1. May be involved in translational regulation. The protein is Pleckstrin homology-like domain family A member 1 (Phlda1) of Rattus norvegicus (Rat).